The chain runs to 363 residues: MMKAFLVLDNGTIFEGESFGYETESVGEIVFNTSMAGYQEILTDPSYCNQIITLTYPMIGNYGIHPDNMESSKIQASGLIVKEYVDLPSNFKSEKTLSQFLKEYKIPAIQGIDTRKLTRFIRTNGSPNGGIFVASEYSPSFLEKVKSFPGIINADLAEVVTTSSKYIFGTHTGKKFKLAVYDYGVKTNILRLLDANGFAVTVYPAKTPSEEIMKEGTDAFFLSNGPGDPAPLDYAIASTQKIMEKRYPLFGICLGHQIIGLSLGKKTEKMKFGHRGGNQPVKNLETGQVEITSQNHGFAVIDDQKQDEPISFLNLNDHTVEGILKSGYPLLTVQYHPESAPGPNDSRYLFQKFYDLVEKTKKG.

The interval 1-173 (MMKAFLVLDN…SKYIFGTHTG (173 aa)) is CPSase. 3 residues coordinate L-glutamine: Ser-46, Gly-225, and Gly-227. Residues 177 to 363 (KLAVYDYGVK…YDLVEKTKKG (187 aa)) form the Glutamine amidotransferase type-1 domain. The active-site Nucleophile is Cys-253. L-glutamine-binding residues include Leu-254, Gln-257, Asn-295, Gly-297, and Phe-298. Active-site residues include His-336 and Glu-338.

It belongs to the CarA family. Composed of two chains; the small (or glutamine) chain promotes the hydrolysis of glutamine to ammonia, which is used by the large (or ammonia) chain to synthesize carbamoyl phosphate. Tetramer of heterodimers (alpha,beta)4.

The catalysed reaction is hydrogencarbonate + L-glutamine + 2 ATP + H2O = carbamoyl phosphate + L-glutamate + 2 ADP + phosphate + 2 H(+). The enzyme catalyses L-glutamine + H2O = L-glutamate + NH4(+). It participates in amino-acid biosynthesis; L-arginine biosynthesis; carbamoyl phosphate from bicarbonate: step 1/1. It functions in the pathway pyrimidine metabolism; UMP biosynthesis via de novo pathway; (S)-dihydroorotate from bicarbonate: step 1/3. Its function is as follows. Small subunit of the glutamine-dependent carbamoyl phosphate synthetase (CPSase). CPSase catalyzes the formation of carbamoyl phosphate from the ammonia moiety of glutamine, carbonate, and phosphate donated by ATP, constituting the first step of 2 biosynthetic pathways, one leading to arginine and/or urea and the other to pyrimidine nucleotides. The small subunit (glutamine amidotransferase) binds and cleaves glutamine to supply the large subunit with the substrate ammonia. This is Carbamoyl phosphate synthase small chain from Leptospira interrogans serogroup Icterohaemorrhagiae serovar copenhageni (strain Fiocruz L1-130).